The following is a 344-amino-acid chain: Gibberellin receptor GID1C (344 aa).

A2 carries the N-acetylalanine modification. Positions 111–113 (HGG) match the Involved in the stabilization of the negatively charged intermediate by the formation of the oxyanion hole motif. Gibberellin A4-binding positions include 113–114 (GS), Y125, and S189. S114, Y125, S189, and F236 together coordinate gibberellin A3. The active site involves S189. The active site involves D287. G318 lines the gibberellin A4 pocket. G318 serves as a coordination point for gibberellin A3.

This sequence belongs to the 'GDXG' lipolytic enzyme family. As to quaternary structure, interacts with the DELLA proteins GAI, RGA, RGL1, RGL2 and RGL3 in a GA-dependent manner. As to expression, widely expressed.

Its subcellular location is the nucleus. Functions as a soluble gibberellin (GA) receptor. GA is an essential hormone that regulates growth and development in plants. Binds with high affinity the biologically active gibberellin GA4, but has no affinity for the biologically inactive GAs. In response to GA, interacts with specific DELLA proteins, known as repressors of GA-induced growth, and targets them for degradation via proteasome. Seems to be required for GA signaling that controls root growth, seed germination and stem elongation. Partially redundant with GID1A and GID1B. In Arabidopsis thaliana (Mouse-ear cress), this protein is Gibberellin receptor GID1C (GID1C).